The sequence spans 156 residues: Small ribosomal subunit protein uS7c (156 aa).

Belongs to the universal ribosomal protein uS7 family. Part of the 30S ribosomal subunit.

Its subcellular location is the plastid. Its function is as follows. One of the primary rRNA binding proteins, it binds directly to 16S rRNA where it nucleates assembly of the head domain of the 30S subunit. The sequence is that of Small ribosomal subunit protein uS7c (rps7) from Prototheca wickerhamii.